The primary structure comprises 862 residues: DNA mismatch repair protein MutS (862 aa).

Position 603–610 (603–610) interacts with ATP; the sequence is GPNMSGKS.

This sequence belongs to the DNA mismatch repair MutS family.

Functionally, this protein is involved in the repair of mismatches in DNA. It is possible that it carries out the mismatch recognition step. This protein has a weak ATPase activity. The chain is DNA mismatch repair protein MutS from Bacillus velezensis (strain DSM 23117 / BGSC 10A6 / LMG 26770 / FZB42) (Bacillus amyloliquefaciens subsp. plantarum).